Here is a 141-residue protein sequence, read N- to C-terminus: ATP synthase F(0) complex subunit C2, mitochondrial (141 aa).

The N-terminal 66 residues, 1–66, are a transit peptide targeting the mitochondrion; the sequence is MFSCFKFIST…RNFQTSAISR (66 aa). Residues 82–102 traverse the membrane as a helical segment; that stretch reads VGVAGSGAGIGTVFGSLIIGY. The residue at position 109 (K109) is an N6,N6,N6-trimethyllysine. A helical membrane pass occupies residues 117–137; it reads ILGFALSEAMGLFCLMVAFLI.

This sequence belongs to the ATPase C chain family. As to quaternary structure, F-type ATPases have 2 components, CF(1) - the catalytic core - and CF(0) - the membrane proton channel. CF(1) has five subunits: alpha(3), beta(3), gamma(1), delta(1), epsilon(1). CF(0) has three main subunits: a, b and c. Interacts with DNAJC30; interaction is direct. Trimethylated by ATPSCKMT at Lys-109. Methylation is required for proper incorporation of the C subunit into the ATP synthase complex and mitochondrial respiration.

It is found in the mitochondrion membrane. Functionally, mitochondrial membrane ATP synthase (F(1)F(0) ATP synthase or Complex V) produces ATP from ADP in the presence of a proton gradient across the membrane which is generated by electron transport complexes of the respiratory chain. F-type ATPases consist of two structural domains, F(1) - containing the extramembraneous catalytic core and F(0) - containing the membrane proton channel, linked together by a central stalk and a peripheral stalk. During catalysis, ATP synthesis in the catalytic domain of F(1) is coupled via a rotary mechanism of the central stalk subunits to proton translocation. Part of the complex F(0) domain. A homomeric c-ring of probably 10 subunits is part of the complex rotary element. The protein is ATP synthase F(0) complex subunit C2, mitochondrial of Pongo abelii (Sumatran orangutan).